The primary structure comprises 270 residues: Glutamate 5-kinase (270 aa).

Lys18 is a binding site for ATP. Residues Ser54, Asp141, and Asn153 each contribute to the substrate site. 173 to 174 (SD) is a binding site for ATP.

This sequence belongs to the glutamate 5-kinase family.

It localises to the cytoplasm. The enzyme catalyses L-glutamate + ATP = L-glutamyl 5-phosphate + ADP. Its pathway is amino-acid biosynthesis; L-proline biosynthesis; L-glutamate 5-semialdehyde from L-glutamate: step 1/2. Catalyzes the transfer of a phosphate group to glutamate to form L-glutamate 5-phosphate. The chain is Glutamate 5-kinase from Leifsonia xyli subsp. xyli (strain CTCB07).